The primary structure comprises 429 residues: Glutamate-1-semialdehyde 2,1-aminomutase 2 (429 aa).

An N6-(pyridoxal phosphate)lysine modification is found at lysine 268.

Belongs to the class-III pyridoxal-phosphate-dependent aminotransferase family. HemL subfamily. In terms of assembly, homodimer. It depends on pyridoxal 5'-phosphate as a cofactor.

The protein resides in the cytoplasm. The catalysed reaction is (S)-4-amino-5-oxopentanoate = 5-aminolevulinate. It participates in porphyrin-containing compound metabolism; protoporphyrin-IX biosynthesis; 5-aminolevulinate from L-glutamyl-tRNA(Glu): step 2/2. The chain is Glutamate-1-semialdehyde 2,1-aminomutase 2 from Staphylococcus aureus (strain Mu50 / ATCC 700699).